A 179-amino-acid chain; its full sequence is Large ribosomal subunit protein uL5 (179 aa).

This sequence belongs to the universal ribosomal protein uL5 family. As to quaternary structure, part of the 50S ribosomal subunit; part of the 5S rRNA/L5/L18/L25 subcomplex. Contacts the 5S rRNA and the P site tRNA. Forms a bridge to the 30S subunit in the 70S ribosome.

Its function is as follows. This is one of the proteins that bind and probably mediate the attachment of the 5S RNA into the large ribosomal subunit, where it forms part of the central protuberance. In the 70S ribosome it contacts protein S13 of the 30S subunit (bridge B1b), connecting the 2 subunits; this bridge is implicated in subunit movement. Contacts the P site tRNA; the 5S rRNA and some of its associated proteins might help stabilize positioning of ribosome-bound tRNAs. In Buchnera aphidicola subsp. Schizaphis graminum (strain Sg), this protein is Large ribosomal subunit protein uL5.